We begin with the raw amino-acid sequence, 267 residues long: Membrane-associated protein Vipp1 (267 aa).

Residues 26-156 are a coiled coil; that stretch reads EKVLEQAVID…KANAELQQTL (131 aa). The interval 224-252 is disordered; it reads GTSAATPQLEAAPVDSSVPANNASQDDAV.

This sequence belongs to the PspA/Vipp/IM30 family.

The protein resides in the cell inner membrane. In terms of biological role, required for thylakoid formation. This Synechocystis sp. (strain ATCC 27184 / PCC 6803 / Kazusa) protein is Membrane-associated protein Vipp1.